The chain runs to 788 residues: ATP-dependent 6-phosphofructokinase, platelet type (788 aa).

Position 1 is an N-acetylmethionine (Met1). The N-terminal catalytic PFK domain 1 stretch occupies residues 1–399 (MSDQDSSTSS…NLNTYKRLAI (399 aa)). A phosphoserine mark is found at Ser2, Ser6, Ser12, and Ser21. Residues Gly34, 97 to 98 (RC), and 127 to 130 (GDGS) each bind ATP. Residue Asp128 coordinates Mg(2+). Ser142 bears the Phosphoserine mark. Substrate-binding positions include 173-175 (SID), Arg210, 217-219 (MGR), Glu273, Arg301, and 307-310 (HVQR). Catalysis depends on Asp175, which acts as the Proton acceptor. A Phosphoserine modification is found at Ser386. Lys395 bears the N6-acetyllysine mark. Residues 400–411 (KEPDDKIPKSNC) are interdomain linker. A C-terminal regulatory PFK domain 2 region spans residues 412–788 (NVAIINVGAP…VHNHGELSAI (377 aa)). Arg481 is a binding site for beta-D-fructose 2,6-bisphosphate. Lys486 bears the N6-acetyllysine mark. Residues 538-542 (TVSNN), Arg576, 583-585 (MGG), and Glu639 each bind beta-D-fructose 2,6-bisphosphate. Ser540 is a glycosylation site (O-linked (GlcNAc) serine). A Phosphotyrosine modification is found at Tyr651. Residues Arg665 and 671 to 674 (HMQQ) contribute to the beta-D-fructose 2,6-bisphosphate site. An N6-acetyllysine modification is found at Lys688. A beta-D-fructose 2,6-bisphosphate-binding site is contributed by Arg744.

It belongs to the phosphofructokinase type A (PFKA) family. ATP-dependent PFK group I subfamily. Eukaryotic two domain clade 'E' sub-subfamily. As to quaternary structure, homo- and heterotetramers. Phosphofructokinase (PFK) enzyme functions as a tetramer composed of different combinations of 3 types of subunits, called PFKM (M), PFKL (L) and PFKP (P). The composition of the PFK tetramer differs according to the tissue type it is present in. The kinetic and regulatory properties of the tetrameric enzyme are dependent on the subunit composition, hence can vary across tissues. Interacts with ATG4B; promoting phosphorylation of ATG4B. It depends on Mg(2+) as a cofactor. GlcNAcylation decreases enzyme activity. In terms of processing, phosphorylation at Ser-386 promotes interaction with ATG4B. In terms of tissue distribution, expressed at high level in neuroendocrine tissues.

The protein resides in the cytoplasm. The catalysed reaction is beta-D-fructose 6-phosphate + ATP = beta-D-fructose 1,6-bisphosphate + ADP + H(+). It functions in the pathway carbohydrate degradation; glycolysis; D-glyceraldehyde 3-phosphate and glycerone phosphate from D-glucose: step 3/4. Its activity is regulated as follows. Allosterically activated by ADP, AMP, or fructose 2,6-bisphosphate, and allosterically inhibited by ATP or citrate. Its function is as follows. Catalyzes the phosphorylation of D-fructose 6-phosphate to fructose 1,6-bisphosphate by ATP, the first committing step of glycolysis. This chain is ATP-dependent 6-phosphofructokinase, platelet type (Pfkp), found in Rattus norvegicus (Rat).